The chain runs to 156 residues: SsrA-binding protein (156 aa).

Belongs to the SmpB family.

It localises to the cytoplasm. Functionally, required for rescue of stalled ribosomes mediated by trans-translation. Binds to transfer-messenger RNA (tmRNA), required for stable association of tmRNA with ribosomes. tmRNA and SmpB together mimic tRNA shape, replacing the anticodon stem-loop with SmpB. tmRNA is encoded by the ssrA gene; the 2 termini fold to resemble tRNA(Ala) and it encodes a 'tag peptide', a short internal open reading frame. During trans-translation Ala-aminoacylated tmRNA acts like a tRNA, entering the A-site of stalled ribosomes, displacing the stalled mRNA. The ribosome then switches to translate the ORF on the tmRNA; the nascent peptide is terminated with the 'tag peptide' encoded by the tmRNA and targeted for degradation. The ribosome is freed to recommence translation, which seems to be the essential function of trans-translation. In Clostridium botulinum (strain Alaska E43 / Type E3), this protein is SsrA-binding protein.